The primary structure comprises 224 residues: UPF0319 protein VC_1853 (224 aa).

The N-terminal stretch at 1–21 (MKLNPLILGLLLSFSAGHSLA) is a signal peptide.

It belongs to the UPF0319 family.

The chain is UPF0319 protein VC_1853 from Vibrio cholerae serotype O1 (strain ATCC 39315 / El Tor Inaba N16961).